The sequence spans 639 residues: PTS-dependent dihydroxyacetone kinase operon regulatory protein (639 aa).

Residues 1–318 (MSGAFNNDGR…MRQLMTSQLG (318 aa)) are sensor domain. Residues 52–189 (AMLTLGQAAL…AIAREVGNLL (138 aa)) form the GAF domain. One can recognise a PAS domain in the interval 203–265 (NQLNALLESM…AVLQQAIKQA (63 aa)). The Sigma-54 factor interaction domain occupies 327-552 (MPQDDPQTRR…LYSVIENLAL (226 aa)). ATP is bound by residues 355-362 (GEEGVGKA) and 415-424 (AHGGTLFLEK).

Homodimer. DhaR forms complexes with DhaK and DhaL-ADP.

Positively regulates the dhaKLM operon from a sigma-70 promoter. Represses its own expression. In Escherichia coli (strain K12), this protein is PTS-dependent dihydroxyacetone kinase operon regulatory protein.